We begin with the raw amino-acid sequence, 469 residues long: UDP-N-acetylmuramate--L-alanine ligase (469 aa).

123-129 contacts ATP; the sequence is GSHGKTT.

Belongs to the MurCDEF family.

Its subcellular location is the cytoplasm. It catalyses the reaction UDP-N-acetyl-alpha-D-muramate + L-alanine + ATP = UDP-N-acetyl-alpha-D-muramoyl-L-alanine + ADP + phosphate + H(+). It participates in cell wall biogenesis; peptidoglycan biosynthesis. Cell wall formation. The sequence is that of UDP-N-acetylmuramate--L-alanine ligase from Synechococcus sp. (strain CC9605).